The sequence spans 388 residues: Cell adhesion molecule 4 (388 aa).

An N-terminal signal peptide occupies residues methionine 1 to glycine 20. An Ig-like V-type domain is found at proline 21–threonine 119. The Extracellular portion of the chain corresponds to glutamine 25–alanine 324. Residues asparagine 31 and asparagine 67 are each glycosylated (N-linked (GlcNAc...) asparagine). 3 disulfides stabilise this stretch: cysteine 44/cysteine 104, cysteine 145/cysteine 199, and cysteine 245/cysteine 291. Ig-like C2-type domains are found at residues proline 124–aspartate 219 and proline 224–valine 307. N-linked (GlcNAc...) asparagine glycosylation occurs at asparagine 286. The helical transmembrane segment at isoleucine 325–valine 345 threads the bilayer. Residues tryptophan 346–isoleucine 388 are Cytoplasmic-facing. Residue serine 361 is modified to Phosphoserine.

It belongs to the nectin family. Monomer and homodimer. In terms of processing, N-glycosylated.

The protein resides in the membrane. Functionally, involved in the cell-cell adhesion. Has calcium- and magnesium-independent cell-cell adhesion activity. May have tumor-suppressor activity. The polypeptide is Cell adhesion molecule 4 (Cadm4) (Rattus norvegicus (Rat)).